A 135-amino-acid polypeptide reads, in one-letter code: Insoluble matrix shell protein 5 (135 aa).

An N-terminal signal peptide occupies residues 1-16 (MILVVTLACLIAVVCC). EF-hand domains are found at residues 21–56 (TDQGQISKVFKAYDIDGNNKISRVEGTMVFRDADLN) and 93–128 (IEFVEGNQGFDHFDKNRDNEISSWEFTQTWMETVRP). 10 residues coordinate Ca(2+): Asp34, Asp36, Asn38, Lys40, Glu45, Asp106, Asn108, Asp110, Glu112, and Glu117.

In terms of tissue distribution, component of the acid-insoluble organic matrix of the calcified shell.

The protein localises to the secreted. The protein is Insoluble matrix shell protein 5 of Ruditapes philippinarum (Japanese carpet shell).